The following is a 475-amino-acid chain: Ribulose bisphosphate carboxylase large chain (475 aa).

The propeptide occupies 1-2; that stretch reads MV. Proline 3 carries the post-translational modification N-acetylproline. Position 14 is an N6,N6,N6-trimethyllysine (lysine 14). Residues asparagine 123 and threonine 173 each contribute to the substrate site. Lysine 175 functions as the Proton acceptor in the catalytic mechanism. Lysine 177 provides a ligand contact to substrate. Mg(2+)-binding residues include lysine 201, aspartate 203, and glutamate 204. Lysine 201 carries the post-translational modification N6-carboxylysine. The active-site Proton acceptor is the histidine 294. Substrate contacts are provided by arginine 295, histidine 327, and serine 379.

The protein belongs to the RuBisCO large chain family. Type I subfamily. In terms of assembly, heterohexadecamer of 8 large chains and 8 small chains. Mg(2+) is required as a cofactor.

The protein localises to the plastid. The protein resides in the chloroplast. The enzyme catalyses 2 (2R)-3-phosphoglycerate + 2 H(+) = D-ribulose 1,5-bisphosphate + CO2 + H2O. It carries out the reaction D-ribulose 1,5-bisphosphate + O2 = 2-phosphoglycolate + (2R)-3-phosphoglycerate + 2 H(+). In terms of biological role, ruBisCO catalyzes two reactions: the carboxylation of D-ribulose 1,5-bisphosphate, the primary event in carbon dioxide fixation, as well as the oxidative fragmentation of the pentose substrate in the photorespiration process. Both reactions occur simultaneously and in competition at the same active site. The polypeptide is Ribulose bisphosphate carboxylase large chain (Chlamydomonas moewusii (Chlamydomonas eugametos)).